The chain runs to 389 residues: Inner membrane transport protein YdhP (389 aa).

At Met-1–Pro-6 the chain is on the cytoplasmic side. The chain crosses the membrane as a helical span at residues Leu-7 to Leu-27. Residues Leu-28 to Gly-43 are Periplasmic-facing. A helical transmembrane segment spans residues Met-44–Leu-64. At Ser-65 to Arg-70 the chain is on the cytoplasmic side. Residues Ser-71 to Pro-91 traverse the membrane as a helical segment. Topologically, residues Asp-92–Arg-100 are periplasmic. A helical membrane pass occupies residues Ile-101 to Val-121. Residues Val-122–Ala-130 are Cytoplasmic-facing. The chain crosses the membrane as a helical span at residues Val-131–Trp-151. Residues Leu-152–Arg-159 are Periplasmic-facing. Residues Met-160–Leu-180 traverse the membrane as a helical segment. Over Pro-181–Val-203 the chain is Cytoplasmic. The chain crosses the membrane as a helical span at residues Leu-204 to Ile-224. Topologically, residues Ser-225 to Pro-236 are periplasmic. Residues Val-237–Gly-257 form a helical membrane-spanning segment. The Cytoplasmic portion of the chain corresponds to Gly-258 to Asn-266. Residues Gly-267 to Ala-287 form a helical membrane-spanning segment. The Periplasmic segment spans residues Arg-288–Lys-290. The helical transmembrane segment at Phe-291 to Leu-311 threads the bilayer. At Gln-312–Asn-330 the chain is on the cytoplasmic side. A helical transmembrane segment spans residues Ile-331–Ala-351. The Periplasmic portion of the chain corresponds to Gly-352–Ser-356. A helical transmembrane segment spans residues Phe-357–Ala-377. At Arg-378–Ser-389 the chain is on the cytoplasmic side.

The protein belongs to the major facilitator superfamily.

It localises to the cell inner membrane. The polypeptide is Inner membrane transport protein YdhP (ydhP) (Escherichia coli O157:H7).